Consider the following 467-residue polypeptide: Ribulose bisphosphate carboxylase large chain (467 aa).

Substrate is bound by residues Xaa106 and Thr156. Lys158 acts as the Proton acceptor in catalysis. Lys160 is a binding site for substrate. Positions 184, 186, and 187 each coordinate Mg(2+). Position 184 is an N6-carboxylysine (Lys184). His276 serves as the catalytic Proton acceptor. Substrate is bound by residues Arg277, His309, and Ser361.

It belongs to the RuBisCO large chain family. Type I subfamily. Heterohexadecamer of 8 large chains and 8 small chains. Mg(2+) serves as cofactor.

The protein resides in the plastid. It is found in the chloroplast. The catalysed reaction is 2 (2R)-3-phosphoglycerate + 2 H(+) = D-ribulose 1,5-bisphosphate + CO2 + H2O. The enzyme catalyses D-ribulose 1,5-bisphosphate + O2 = 2-phosphoglycolate + (2R)-3-phosphoglycerate + 2 H(+). In terms of biological role, ruBisCO catalyzes two reactions: the carboxylation of D-ribulose 1,5-bisphosphate, the primary event in carbon dioxide fixation, as well as the oxidative fragmentation of the pentose substrate in the photorespiration process. Both reactions occur simultaneously and in competition at the same active site. The chain is Ribulose bisphosphate carboxylase large chain (rbcL) from Chondrus crispus (Carrageen Irish moss).